We begin with the raw amino-acid sequence, 246 residues long: Ribosomal RNA small subunit methyltransferase J (246 aa).

Residues 115-116 (ER) and aspartate 169 each bind S-adenosyl-L-methionine.

This sequence belongs to the methyltransferase superfamily. RsmJ family.

The protein localises to the cytoplasm. The catalysed reaction is guanosine(1516) in 16S rRNA + S-adenosyl-L-methionine = N(2)-methylguanosine(1516) in 16S rRNA + S-adenosyl-L-homocysteine + H(+). Specifically methylates the guanosine in position 1516 of 16S rRNA. This is Ribosomal RNA small subunit methyltransferase J from Buchnera aphidicola subsp. Acyrthosiphon pisum (strain APS) (Acyrthosiphon pisum symbiotic bacterium).